Reading from the N-terminus, the 115-residue chain is NADH-ubiquinone oxidoreductase chain 3 (115 aa).

Helical transmembrane passes span leucine 3 to tryptophan 23, phenylalanine 55 to leucine 75, and leucine 84 to tyrosine 104.

The protein belongs to the complex I subunit 3 family. Core subunit of respiratory chain NADH dehydrogenase (Complex I) which is composed of 45 different subunits. Interacts with TMEM186. Interacts with TMEM242.

The protein resides in the mitochondrion inner membrane. The enzyme catalyses a ubiquinone + NADH + 5 H(+)(in) = a ubiquinol + NAD(+) + 4 H(+)(out). In terms of biological role, core subunit of the mitochondrial membrane respiratory chain NADH dehydrogenase (Complex I) which catalyzes electron transfer from NADH through the respiratory chain, using ubiquinone as an electron acceptor. Essential for the catalytic activity of complex I. This is NADH-ubiquinone oxidoreductase chain 3 from Bos indicus (Zebu).